A 165-amino-acid polypeptide reads, in one-letter code: Photosystem I assembly protein Ycf3 (165 aa).

3 TPR repeats span residues 32–65 (AFTY…EIDP), 69–102 (SYIL…NPFL), and 117–150 (GEQA…TPGN).

It belongs to the Ycf3 family.

Its subcellular location is the plastid. The protein localises to the chloroplast thylakoid membrane. Essential for the assembly of the photosystem I (PSI) complex. May act as a chaperone-like factor to guide the assembly of the PSI subunits. In Spinacia oleracea (Spinach), this protein is Photosystem I assembly protein Ycf3.